Here is an 823-residue protein sequence, read N- to C-terminus: Nuclear factor I family protein (823 aa).

Residues 1 to 56 (MEPHLKIDVSSASGSTTTGATASTSEAPQDSQAQQTMPPPSSDWSNQFNSPEAVSP) form a disordered region. Over residues 10 to 25 (SSASGSTTTGATASTS) the composition is skewed to low complexity. Over residues 26–52 (EAPQDSQAQQTMPPPSSDWSNQFNSPE) the composition is skewed to polar residues. The CTF/NF-I DNA-binding region spans 61 to 253 (IKCFSPYSQE…DVDTKITLTY (193 aa)). 3 disordered regions span residues 364-408 (PYPI…NDEV), 433-468 (SRTQ…AFRS), and 777-823 (APPA…NEKK). Basic and acidic residues predominate over residues 386–396 (PSEKRSRDISS). Over residues 433–447 (SRTQQNQGAPGTSRQ) the composition is skewed to polar residues. The segment covering 777–794 (APPACSPSSSNSSLGAAN) has biased composition (low complexity).

The protein belongs to the CTF/NF-I family. As to expression, expressed in muscles, neurons and intestinal cells.

The protein resides in the nucleus. Probable transcription factor which recognizes and binds the palindromic sequence 5'-TTGGCANNNTGCCAA-3' present in promoters. Plays a role in locomotion, pharyngeal pumping, egg-laying, and life span. The polypeptide is Nuclear factor I family protein (Caenorhabditis elegans).